Consider the following 358-residue polypeptide: Protein RecA 2 (358 aa).

69–76 (GPESSGKT) is an ATP binding site. The tract at residues 331-358 (GIGKSGAPSPRRRTSPRRPKVAARSAAV) is disordered. Basic residues predominate over residues 340–351 (PRRRTSPRRPKV).

This sequence belongs to the RecA family.

It is found in the cytoplasm. Its function is as follows. Can catalyze the hydrolysis of ATP in the presence of single-stranded DNA, the ATP-dependent uptake of single-stranded DNA by duplex DNA, and the ATP-dependent hybridization of homologous single-stranded DNAs. It interacts with LexA causing its activation and leading to its autocatalytic cleavage. The polypeptide is Protein RecA 2 (Myxococcus xanthus).